Here is a 69-residue protein sequence, read N- to C-terminus: Disintegrin VLO5B (69 aa).

Residues 1–66 (MNSANPCCDP…DCPRNPWKSE (66 aa)) form the Disintegrin domain. 4 disulfides stabilise this stretch: C7/C30, C21/C27, C26/C51, and C39/C58. Residues 43–45 (MLD) carry the Cell attachment site; atypical (MLD) motif.

The protein belongs to the disintegrin family. Dimeric disintegrin subfamily. In terms of assembly, heterodimer with VLO5A; disulfide-linked. In terms of tissue distribution, expressed by the venom gland.

The protein localises to the secreted. Poor inhibitor of platelet aggregation. The disintegrin inhibits the adhesion of the alpha-4/beta-1 (ITGA4/ITGB1) integrin to VCAM-1. Inhibition on alpha-2b/beta-3 (ITGA2B/ITGB3) is low. The polypeptide is Disintegrin VLO5B (Macrovipera lebetina obtusa (Levant blunt-nosed viper)).